The sequence spans 195 residues: Imidazoleglycerol-phosphate dehydratase (195 aa).

It belongs to the imidazoleglycerol-phosphate dehydratase family.

The protein resides in the cytoplasm. The enzyme catalyses D-erythro-1-(imidazol-4-yl)glycerol 3-phosphate = 3-(imidazol-4-yl)-2-oxopropyl phosphate + H2O. Its pathway is amino-acid biosynthesis; L-histidine biosynthesis; L-histidine from 5-phospho-alpha-D-ribose 1-diphosphate: step 6/9. This is Imidazoleglycerol-phosphate dehydratase from Methanosphaerula palustris (strain ATCC BAA-1556 / DSM 19958 / E1-9c).